The chain runs to 636 residues: Probable potassium transport system protein Kup (636 aa).

12 helical membrane-spanning segments follow: residues V22–Y42, I64–I84, L115–P135, F150–L170, L182–I202, F220–T240, W261–L281, L293–I313, I351–F371, V383–L403, P408–A428, and I433–T453.

It belongs to the HAK/KUP transporter (TC 2.A.72) family.

The protein localises to the cell inner membrane. It carries out the reaction K(+)(in) + H(+)(in) = K(+)(out) + H(+)(out). Functionally, transport of potassium into the cell. Likely operates as a K(+):H(+) symporter. The polypeptide is Probable potassium transport system protein Kup (Pseudomonas putida (strain ATCC 700007 / DSM 6899 / JCM 31910 / BCRC 17059 / LMG 24140 / F1)).